We begin with the raw amino-acid sequence, 723 residues long: Catalase-peroxidase (723 aa).

The segment at residues 89–212 (WHSAGTYRTG…LAAVQMGLIY (124 aa)) is a cross-link (tryptophyl-tyrosyl-methioninium (Trp-Tyr) (with M-238)). Residue H90 is the Proton acceptor of the active site. The tryptophyl-tyrosyl-methioninium (Tyr-Met) (with W-89) cross-link spans 212 to 238 (YVNPEGPNGDPDPFAAAVDIRETFARM). H253 lines the heme b pocket.

Belongs to the peroxidase family. Peroxidase/catalase subfamily. Homodimer or homotetramer. The cofactor is heme b. Post-translationally, formation of the three residue Trp-Tyr-Met cross-link is important for the catalase, but not the peroxidase activity of the enzyme.

The catalysed reaction is H2O2 + AH2 = A + 2 H2O. It catalyses the reaction 2 H2O2 = O2 + 2 H2O. Bifunctional enzyme with both catalase and broad-spectrum peroxidase activity. This chain is Catalase-peroxidase, found in Shewanella baltica (strain OS185).